Here is a 646-residue protein sequence, read N- to C-terminus: Alkyl/aryl-sulfatase BDS1 (646 aa).

N-acetylmethionine is present on M1. The Zn(2+) site is built by H162, H164, D166, H167, E273, E292, and H337.

This sequence belongs to the metallo-beta-lactamase superfamily. Type III sulfatase family. Requires Zn(2+) as cofactor.

Functionally, alkyl/aryl-sulfatase. Enables the use of SDS and 4-nitrocatechol as sulfur source. The sequence is that of Alkyl/aryl-sulfatase BDS1 (BDS1) from Saccharomyces cerevisiae (strain ATCC 204508 / S288c) (Baker's yeast).